Consider the following 209-residue polypeptide: Large ribosomal subunit protein bL25 (209 aa).

Residues 190 to 209 (GLKSADDEAEGEDAEEAAAE) are disordered. The span at 196–209 (DEAEGEDAEEAAAE) shows a compositional bias: acidic residues.

This sequence belongs to the bacterial ribosomal protein bL25 family. CTC subfamily. Part of the 50S ribosomal subunit; part of the 5S rRNA/L5/L18/L25 subcomplex. Contacts the 5S rRNA. Binds to the 5S rRNA independently of L5 and L18.

Functionally, this is one of the proteins that binds to the 5S RNA in the ribosome where it forms part of the central protuberance. The polypeptide is Large ribosomal subunit protein bL25 (Ruegeria sp. (strain TM1040) (Silicibacter sp.)).